The sequence spans 345 residues: Glycerol-3-phosphate dehydrogenase [NAD(P)+] (345 aa).

Residues Ser11, Trp12, His32, Arg33, and Lys106 each coordinate NADPH. Sn-glycerol 3-phosphate is bound by residues Lys106, Gly137, and Ser139. Ala141 serves as a coordination point for NADPH. Sn-glycerol 3-phosphate contacts are provided by Lys192, Asp245, Ser255, Arg256, and Asn257. Lys192 acts as the Proton acceptor in catalysis. Arg256 contributes to the NADPH binding site. The NADPH site is built by Val280 and Glu282.

The protein belongs to the NAD-dependent glycerol-3-phosphate dehydrogenase family.

The protein resides in the cytoplasm. It catalyses the reaction sn-glycerol 3-phosphate + NAD(+) = dihydroxyacetone phosphate + NADH + H(+). The enzyme catalyses sn-glycerol 3-phosphate + NADP(+) = dihydroxyacetone phosphate + NADPH + H(+). It participates in membrane lipid metabolism; glycerophospholipid metabolism. Its activity is regulated as follows. Does not seem to be inhibited by sn-glycerol 3-phosphate, in contrast to the E.coli homolog enzyme which is very sensitive to allosteric inhibition by G3P. Functionally, catalyzes the reduction of the glycolytic intermediate dihydroxyacetone phosphate (DHAP) to sn-glycerol 3-phosphate (G3P), the key precursor for phospholipid synthesis. This Bacillus subtilis (strain 168) protein is Glycerol-3-phosphate dehydrogenase [NAD(P)+].